A 334-amino-acid polypeptide reads, in one-letter code: Syntaxin-18 (334 aa).

Topologically, residues 1 to 308 are cytoplasmic; the sequence is MAVDITLLFR…EDIREAIKNN (308 aa). 2 disordered regions span residues 29-50 and 166-225; these read GGAD…GDFS and LSKL…GEDE. Composition is skewed to basic and acidic residues over residues 33-50 and 166-182; these read GSRD…GDFS and LSKL…DSTS. Polar residues predominate over residues 183 to 192; that stretch reads EKAPQNASQD. Residues 193-207 show a composition bias toward basic and acidic residues; it reads SEGKPAAEELPEKPL. In terms of domain architecture, t-SNARE coiled-coil homology spans 242–304; that stretch reads IGEMNSLFDE…KEGNEDIREA (63 aa). A helical; Anchor for type IV membrane protein transmembrane segment spans residues 309–329; sequence AGFRVWILFFLVMCSFSLLFL. Residues 330–334 lie on the Lumenal side of the membrane; it reads DWYDS.

This sequence belongs to the syntaxin family. Component of a SNARE complex consisting of STX18, USE1L, BNIP1/SEC20L, and SEC22B. RINT1/TIP20L and ZW10 are associated with the complex through interaction with BNIP1/SEC20L. Interacts directly with USE1L and BNIP1/SEC20L.

Its subcellular location is the endoplasmic reticulum membrane. The protein resides in the golgi apparatus membrane. Functionally, syntaxin that may be involved in targeting and fusion of Golgi-derived retrograde transport vesicles with the ER. The protein is Syntaxin-18 (Stx18) of Mus musculus (Mouse).